A 387-amino-acid polypeptide reads, in one-letter code: MEKVVIVDAIRTPMGRSKGGAFRQVRAEDLSAHLMRSLLSRNPQLEASAIDDIYWGCVQQTLEQGFNIARNAALLAEIPHSVPAVTVNRLCGSSMQALHDAARMIMTGDASVCLVGGVEHMGHVPMNHGVDFHPGLSRNVAKAAGMMGLTAEMLSRMHGISREMQDAFAARSHQRAWAATQAGHFKQEIIPTSGHDADGVLKRYDFDEVIRPETTAEGLSQLKPAFDPANGTVTAGTSSALSDGAAAMLVMSESRARELGLTPRARIRSMAVVGCDPSIMGYGPVPASKLALKKAGLTASDIDLFEMNEAFAAQILPCIKDLGLMEQIDEKINLNGGAIALGHPLGCSGARISTTLINLMERRDAELGLATMCIGLGQGIATVFERV.

Cys-91 functions as the Acyl-thioester intermediate in the catalytic mechanism. Catalysis depends on proton acceptor residues His-343 and Cys-373.

The protein belongs to the thiolase-like superfamily. Thiolase family. In terms of assembly, heterotetramer of two alpha chains (FadB) and two beta chains (FadA).

Its subcellular location is the cytoplasm. It catalyses the reaction an acyl-CoA + acetyl-CoA = a 3-oxoacyl-CoA + CoA. The protein operates within lipid metabolism; fatty acid beta-oxidation. In terms of biological role, catalyzes the final step of fatty acid oxidation in which acetyl-CoA is released and the CoA ester of a fatty acid two carbons shorter is formed. In Cronobacter sakazakii (strain ATCC BAA-894) (Enterobacter sakazakii), this protein is 3-ketoacyl-CoA thiolase.